A 224-amino-acid polypeptide reads, in one-letter code: Small ribosomal subunit protein uS5 (224 aa).

The segment at 1–40 is disordered; it reads MAEQPAGGQGAGDSRDSRGDRDSRGRRGDGGRGGRDRDGD. Over residues 13–40 the composition is skewed to basic and acidic residues; sequence DSRDSRGDRDSRGRRGDGGRGGRDRDGD. Residues 44–107 enclose the S5 DRBM domain; that stretch reads YLERVVAINR…EEARKGFFRV (64 aa).

This sequence belongs to the universal ribosomal protein uS5 family. As to quaternary structure, part of the 30S ribosomal subunit. Contacts proteins S4 and S8.

With S4 and S12 plays an important role in translational accuracy. Its function is as follows. Located at the back of the 30S subunit body where it stabilizes the conformation of the head with respect to the body. This is Small ribosomal subunit protein uS5 from Mycolicibacterium paratuberculosis (strain ATCC BAA-968 / K-10) (Mycobacterium paratuberculosis).